The following is a 607-amino-acid chain: Large ribosomal subunit assembly factor BipA (607 aa).

Residues Glu3–Asp198 enclose the tr-type G domain. GTP is bound by residues Asp15–Thr20 and Asn128–Asp131.

It belongs to the TRAFAC class translation factor GTPase superfamily. Classic translation factor GTPase family. BipA subfamily. As to quaternary structure, monomer.

The protein localises to the cytoplasm. It catalyses the reaction GTP + H2O = GDP + phosphate + H(+). A 50S ribosomal subunit assembly protein with GTPase activity, required for 50S subunit assembly at low temperatures, may also play a role in translation. Binds GTP and analogs. Binds the 70S ribosome between the 30S and 50S subunits, in a similar position as ribosome-bound EF-G; it contacts a number of ribosomal proteins, both rRNAs and the A-site tRNA. This is Large ribosomal subunit assembly factor BipA from Shigella flexneri.